The sequence spans 999 residues: Hypoxia up-regulated protein 1 (999 aa).

An N-terminal signal peptide occupies residues 1-32 (MAATVRRQRPRRLLCWALVAVLLADLLALSDT). 3 N-linked (GlcNAc...) asparagine glycosylation sites follow: N155, N222, and N515. Phosphoserine is present on S567. Residues 567–694 (SPEEESTLTK…KKPKPARKQK (128 aa)) are disordered. Residues 574-583 (LTKLGNTISS) show a composition bias toward polar residues. A glycan (N-linked (GlcNAc...) asparagine) is linked at N596. Composition is skewed to basic and acidic residues over residues 611–626 (GSKDEPAEQGELKEEA) and 641–668 (PKGDAAREGEKPDEKESGDKPEAQKPNE). The segment covering 669–680 (KGQAGPEGAAPA) has biased composition (low complexity). N-linked (GlcNAc...) asparagine glycosylation is found at N830, N862, and N869. The residue at position 883 (K883) is an N6-acetyllysine. Positions 909 to 999 (AKFTKPRPRP…QKRPSKNDEL (91 aa)) are disordered. 2 N-linked (GlcNAc...) asparagine glycosylation sites follow: N922 and N931. Positions 949 to 962 (EEAKPILEPDKEET) are enriched in basic and acidic residues. The Prevents secretion from ER motif lies at 996–999 (NDEL).

It belongs to the heat shock protein 70 family. As to quaternary structure, part of a large chaperone multiprotein complex comprising DNAJB11, HSP90B1, HSPA5, HYOU, PDIA2, PDIA4, PDIA6, PPIB, SDF2L1, UGGT1 and very small amounts of ERP29, but not, or at very low levels, CALR nor CANX.

It localises to the endoplasmic reticulum lumen. Has a pivotal role in cytoprotective cellular mechanisms triggered by oxygen deprivation. Promotes HSPA5/BiP-mediated ATP nucleotide exchange and thereby activates the unfolded protein response (UPR) pathway in the presence of endoplasmic reticulum stress. May play a role as a molecular chaperone and participate in protein folding. The protein is Hypoxia up-regulated protein 1 (Hyou1) of Mus musculus (Mouse).